The sequence spans 424 residues: UDP-N-acetylglucosamine 1-carboxyvinyltransferase (424 aa).

Residue 22–23 (KN) participates in phosphoenolpyruvate binding. Residue Arg-93 coordinates UDP-N-acetyl-alpha-D-glucosamine. Cys-117 serves as the catalytic Proton donor. 2-(S-cysteinyl)pyruvic acid O-phosphothioketal is present on Cys-117. UDP-N-acetyl-alpha-D-glucosamine is bound by residues 162–165 (KVSV), Asp-307, and Ile-329.

It belongs to the EPSP synthase family. MurA subfamily.

The protein localises to the cytoplasm. It catalyses the reaction phosphoenolpyruvate + UDP-N-acetyl-alpha-D-glucosamine = UDP-N-acetyl-3-O-(1-carboxyvinyl)-alpha-D-glucosamine + phosphate. The protein operates within cell wall biogenesis; peptidoglycan biosynthesis. Cell wall formation. Adds enolpyruvyl to UDP-N-acetylglucosamine. In Actinobacillus pleuropneumoniae serotype 3 (strain JL03), this protein is UDP-N-acetylglucosamine 1-carboxyvinyltransferase.